The chain runs to 312 residues: Taste receptor type 2 member 9 (312 aa).

Topologically, residues 1 to 9 (MPSAIEAIY) are extracellular. The helical transmembrane segment at 10 to 32 (IILIAGELTIGIWGNGFIVLVNC) threads the bilayer. The Cytoplasmic portion of the chain corresponds to 33-52 (IDWLKRRDVSLIDIILISLA). A helical membrane pass occupies residues 53–72 (ISRICLLXVISLDGFFMLLF). Residues 73–86 (PTTYGNSVLVSIVB) are Extracellular-facing. The chain crosses the membrane as a helical span at residues 87–109 (IVWTFANNSSLWFTSCLSIFYLL). Residues 110–128 (KIANISHPFFFWLKLKINK) lie on the Cytoplasmic side of the membrane. The helical transmembrane segment at 129 to 146 (VILAILLGSFLISLVISV) threads the bilayer. Topologically, residues 147–180 (XMNDDMWYHLFKVSHEENITWEFKVSKIPGTFKQ) are extracellular. N164 carries an N-linked (GlcNAc...) asparagine glycan. The chain crosses the membrane as a helical span at residues 181–203 (LTLNLGAMVPFILCLISFSLLLF). At 204 to 234 (SLVRHTKQIQLXATGFRDPSTEAHMRAIKAV) the chain is on the cytoplasmic side. Residues 235–257 (IIFLLLLIVYYPVFLVMTSSALI) traverse the membrane as a helical segment. The Extracellular segment spans residues 258–261 (PQGK). Residues 262-284 (LVLMIGDIVTITFPSSHSFILIM) form a helical membrane-spanning segment. The Cytoplasmic segment spans residues 285–312 (GNSKLREAFLKMLRFVKRFLRRRKPFVP).

The protein belongs to the G-protein coupled receptor T2R family.

Its subcellular location is the membrane. Functionally, gustducin-coupled receptor implicated in the perception of bitter compounds in the oral cavity and the gastrointestinal tract. Signals through PLCB2 and the calcium-regulated cation channel TRPM5. This Pongo pygmaeus (Bornean orangutan) protein is Taste receptor type 2 member 9 (TAS2R9).